A 319-amino-acid polypeptide reads, in one-letter code: Large ribosomal subunit protein uL10 (319 aa).

Residues 286–295 show a composition bias toward low complexity; that stretch reads ADSGAAAPSA. Residues 286 to 319 form a disordered region; it reads ADSGAAAPSAAKEEEKKEEPEEESDGDLGMSLFD.

The protein belongs to the universal ribosomal protein uL10 family. In terms of assembly, P0 forms a pentameric complex by interaction with dimers of P1 and P2. Interacts with NSF. Post-translationally, phosphorylated. Highly expressed in stems, inflorescences and immature seeds (at protein level). Expressed in leaves and mature seeds (at protein level).

In terms of biological role, ribosomal protein P0 is the functional equivalent of E.coli protein L10. The polypeptide is Large ribosomal subunit protein uL10 (Oryza sativa subsp. japonica (Rice)).